We begin with the raw amino-acid sequence, 100 residues long: UPF0251 protein swp_0615 (100 aa).

This sequence belongs to the UPF0251 family.

The polypeptide is UPF0251 protein swp_0615 (Shewanella piezotolerans (strain WP3 / JCM 13877)).